We begin with the raw amino-acid sequence, 297 residues long: Probable endonuclease 4 (297 aa).

9 residues coordinate Zn(2+): His69, His110, Glu145, Asp179, His182, His214, Asp227, His229, and Glu259.

It belongs to the AP endonuclease 2 family. Zn(2+) serves as cofactor.

The catalysed reaction is Endonucleolytic cleavage to 5'-phosphooligonucleotide end-products.. Functionally, endonuclease IV plays a role in DNA repair. It cleaves phosphodiester bonds at apurinic or apyrimidinic (AP) sites, generating a 3'-hydroxyl group and a 5'-terminal sugar phosphate. This Listeria welshimeri serovar 6b (strain ATCC 35897 / DSM 20650 / CCUG 15529 / CIP 8149 / NCTC 11857 / SLCC 5334 / V8) protein is Probable endonuclease 4.